The primary structure comprises 360 residues: Phospho-N-acetylmuramoyl-pentapeptide-transferase (360 aa).

10 consecutive transmembrane segments (helical) span residues 21–41 (YVTFRAILGLMTALMFSLWWG), 74–94 (MGGILILAGVFISVLLWGDLG), 97–117 (YVWVVLFVLASFGLIGFIDDY), 134–154 (YILQSLAALVIAFYLYASADM), 168–188 (IMPQLGGFFIVLAYFTIVGSS), 199–219 (GLAIMPTVMVAAAFALIAYLS), 236–256 (AGELVIVCTAIVGAGLGFLWF), 263–283 (VFMGDVGSLSLGAALGAIAVL), 288–308 (ILLVIMGGVFVMETVSVILQV), and 338–358 (VIVRFWIISLFLVLLGLATLK).

The protein belongs to the glycosyltransferase 4 family. MraY subfamily. Mg(2+) serves as cofactor.

It localises to the cell inner membrane. The catalysed reaction is UDP-N-acetyl-alpha-D-muramoyl-L-alanyl-gamma-D-glutamyl-meso-2,6-diaminopimeloyl-D-alanyl-D-alanine + di-trans,octa-cis-undecaprenyl phosphate = di-trans,octa-cis-undecaprenyl diphospho-N-acetyl-alpha-D-muramoyl-L-alanyl-D-glutamyl-meso-2,6-diaminopimeloyl-D-alanyl-D-alanine + UMP. It participates in cell wall biogenesis; peptidoglycan biosynthesis. Its function is as follows. Catalyzes the initial step of the lipid cycle reactions in the biosynthesis of the cell wall peptidoglycan: transfers peptidoglycan precursor phospho-MurNAc-pentapeptide from UDP-MurNAc-pentapeptide onto the lipid carrier undecaprenyl phosphate, yielding undecaprenyl-pyrophosphoryl-MurNAc-pentapeptide, known as lipid I. The chain is Phospho-N-acetylmuramoyl-pentapeptide-transferase from Shewanella woodyi (strain ATCC 51908 / MS32).